The sequence spans 211 residues: Uracil phosphoribosyltransferase (211 aa).

Residues Arg78, Arg103, and 130-138 (DPMLATGAT) each bind 5-phospho-alpha-D-ribose 1-diphosphate. Uracil-binding positions include Ile195 and 200–202 (GDA). Asp201 lines the 5-phospho-alpha-D-ribose 1-diphosphate pocket.

Belongs to the UPRTase family. The cofactor is Mg(2+).

The enzyme catalyses UMP + diphosphate = 5-phospho-alpha-D-ribose 1-diphosphate + uracil. It functions in the pathway pyrimidine metabolism; UMP biosynthesis via salvage pathway; UMP from uracil: step 1/1. With respect to regulation, allosterically activated by GTP. Its function is as follows. Catalyzes the conversion of uracil and 5-phospho-alpha-D-ribose 1-diphosphate (PRPP) to UMP and diphosphate. The sequence is that of Uracil phosphoribosyltransferase from Renibacterium salmoninarum (strain ATCC 33209 / DSM 20767 / JCM 11484 / NBRC 15589 / NCIMB 2235).